The sequence spans 1146 residues: Elicitor of plant defense protein 1 (1146 aa).

Disordered stretches follow at residues 25-75 and 156-226; these read DPLP…RLSN and ARPP…PRQG. The span at 164–177 shows a compositional bias: basic and acidic residues; that stretch reads RAERIKAEDSDQSG. Residues 246-500 enclose the uDENN domain; the sequence is PLNTDPNMHP…NLCTEAFSPL (255 aa). The 135-residue stretch at 522 to 656 folds into the cDENN domain; it reads VNEIPGSRTI…HRRKLHALLQ (135 aa). One can recognise a dDENN domain in the interval 658-1016; that stretch reads AAPAKLRYGV…ERETKPGTTA (359 aa). Residues 730–806 form a disordered region; that stretch reads LHSKVDPNKP…RRSSSFGVDK (77 aa). Residues 732–743 show a composition bias toward basic and acidic residues; sequence SKVDPNKPDRPG. Residues 744 to 760 are compositionally biased toward low complexity; that stretch reads TSKSTRTSPPSSVSPVS. The span at 769–783 shows a compositional bias: polar residues; the sequence is TPVSRSDSGFALTST. The segment covering 784-797 has biased composition (basic and acidic residues); the sequence is LREKRSRNFDEKTR. The Phorbol-ester/DAG-type zinc finger occupies 883–931; sequence GHCFNWEEGALSSSCSVCDDRAEGDGIYKCSGCSAFAHGRCLGCVSLAC. Residues 1121–1146 form a disordered region; it reads PRPEQRGTRGLVRKQVPSMLGTSPTN.

The protein belongs to the EPD1 elicitor family. As to quaternary structure, interacts with host cotton EIR5A (AC A0A5J5T2N2) and EIR5D (AC A0A5J5NT52) and host N.benthamiana EIR (AC P0DXJ0).

It is found in the secreted. It localises to the host cell. Its function is as follows. Acts as an elicitor that triggers defense responses in both Nicotiana benthamiana and cotton plants. Triggers the accumulation of reactive oxygen species (ROS) and the activation of cell death in cotton plants. Induces significantly enhanced resistance of Nicotiana benthamiana to both the broad-host-range filamentous pathogen Botrytis cinerea and the semibiotrophic pathogen Phytophthora capsici. Stimulates the expression of EIR5A (AC A0A5J5T2N2) and EIR5D (AC A0A5J5NT52) in cotton plants and recognition of EPD1 potentiates EIRs to enhance cotton PAMP-triggered immunity (PTI). This chain is Elicitor of plant defense protein 1, found in Verticillium dahliae (strain VdLs.17 / ATCC MYA-4575 / FGSC 10137) (Verticillium wilt).